Reading from the N-terminus, the 544-residue chain is Inosine-5'-monophosphate dehydrogenase (544 aa).

2 consecutive CBS domains span residues 132-192 and 194-250; these read FITD…PIKS and MTTE…PYAS. NAD(+) is bound by residues 288 to 290 and 338 to 340; these read DSS and GMG. K(+) contacts are provided by G340 and G342. Residue S343 coordinates IMP. C345 is a binding site for K(+). The active-site Thioimidate intermediate is C345. IMP is bound by residues 378–380, 401–402, and 425–429; these read DGG, GG, and YRGMG. Catalysis depends on R458, which acts as the Proton acceptor. IMP is bound at residue Q470. K(+) contacts are provided by E529, G530, and G531.

This sequence belongs to the IMPDH/GMPR family. Homotetramer. K(+) serves as cofactor.

The protein resides in the cytoplasm. The catalysed reaction is IMP + NAD(+) + H2O = XMP + NADH + H(+). The protein operates within purine metabolism; XMP biosynthesis via de novo pathway; XMP from IMP: step 1/1. Mycophenolic acid (MPA) is a non-competitive inhibitor that prevents formation of the closed enzyme conformation by binding to the same site as the amobile flap. In contrast, mizoribine monophosphate (MZP) is a competitive inhibitor that induces the closed conformation. MPA is a potent inhibitor of mammalian IMPDHs but a poor inhibitor of the bacterial enzymes. MZP is a more potent inhibitor of bacterial IMPDH. Catalyzes the conversion of inosine 5'-phosphate (IMP) to xanthosine 5'-phosphate (XMP), the first committed and rate-limiting step in the de novo synthesis of guanine nucleotides, and therefore plays an important role in the regulation of cell growth. The chain is Inosine-5'-monophosphate dehydrogenase from Cryptococcus neoformans var. neoformans serotype D (strain JEC21 / ATCC MYA-565) (Filobasidiella neoformans).